The sequence spans 414 residues: Serine hydroxymethyltransferase (414 aa).

Residues Leu121 and 125 to 127 contribute to the (6S)-5,6,7,8-tetrahydrofolate site; that span reads GHL. Lys229 carries the N6-(pyridoxal phosphate)lysine modification.

Belongs to the SHMT family. As to quaternary structure, homodimer. Pyridoxal 5'-phosphate is required as a cofactor.

It localises to the cytoplasm. The catalysed reaction is (6R)-5,10-methylene-5,6,7,8-tetrahydrofolate + glycine + H2O = (6S)-5,6,7,8-tetrahydrofolate + L-serine. The protein operates within one-carbon metabolism; tetrahydrofolate interconversion. Its pathway is amino-acid biosynthesis; glycine biosynthesis; glycine from L-serine: step 1/1. Functionally, catalyzes the reversible interconversion of serine and glycine with tetrahydrofolate (THF) serving as the one-carbon carrier. This reaction serves as the major source of one-carbon groups required for the biosynthesis of purines, thymidylate, methionine, and other important biomolecules. Also exhibits THF-independent aldolase activity toward beta-hydroxyamino acids, producing glycine and aldehydes, via a retro-aldol mechanism. This chain is Serine hydroxymethyltransferase, found in Polaromonas sp. (strain JS666 / ATCC BAA-500).